The primary structure comprises 145 residues: Leghemoglobin (145 aa).

The Globin domain maps to 3 to 145; it reads GFTEKQEALV…ELAAALKKAF (143 aa). A nitrated tyrosine mark is found at Tyr-26 and Tyr-31. His-62 is an O2 binding site. 3 residues coordinate heme b: Lys-65, His-93, and Lys-96. Tyr-134 carries the post-translational modification Nitrated tyrosine.

It belongs to the plant globin family. As to quaternary structure, monomer. In terms of processing, nitrated in effective nodules and particularly in hypoxic conditions; this mechanism may play a protective role in the symbiosis by buffering toxic peroxynitrite NO(2)(-). Nitration level decrease during nodule senescence. Root nodules.

It localises to the cytoplasm. It is found in the cytosol. Its subcellular location is the nucleus. In terms of biological role, leghemoglobin that reversibly binds oxygen O(2) through a pentacoordinated heme iron. In root nodules, facilitates the diffusion of oxygen to the bacteroids while preventing the bacterial nitrogenase from being inactivated by buffering dioxygen, nitric oxide and carbon monoxide, and promoting the formation of reactive oxygen species (ROS, e.g. H(2)O(2)). This role is essential for symbiotic nitrogen fixation (SNF). In Psophocarpus tetragonolobus (Winged bean), this protein is Leghemoglobin.